The chain runs to 84 residues: Alpha-mammal toxin Aah3 (84 aa).

The first 19 residues, 1–19 (MNYLVMISLALLLMTGVES), serve as a signal peptide directing secretion. Residues 21–82 (RDGYIVDSKN…PIKDPSYKCH (62 aa)) form the LCN-type CS-alpha/beta domain. 4 disulfides stabilise this stretch: C31-C81, C35-C53, C39-C63, and C43-C65. Position 84 (R84) is a propeptide, removed by a carboxypeptidase.

It belongs to the long (4 C-C) scorpion toxin superfamily. Sodium channel inhibitor family. Alpha subfamily. Expressed by the venom gland.

It is found in the secreted. Functionally, alpha toxins bind voltage-independently at site-3 of sodium channels (Nav) and inhibit the inactivation of the activated channels, thereby blocking neuronal transmission. The chain is Alpha-mammal toxin Aah3 from Androctonus australis (Sahara scorpion).